The chain runs to 632 residues: Epithelial sodium channel subunit alpha (632 aa).

The Cytoplasmic portion of the chain corresponds to Met1 to Ala49. The helical transmembrane segment at Phe50–Phe70 threads the bilayer. Over Gly71–Ser520 the chain is Extracellular. Intrachain disulfides connect Cys97–Cys264, Cys189–Cys196, Cys241–Cys248, Cys355–Cys440, Cys377–Cys417, Cys377–Cys436, Cys381–Cys432, Cys390–Cys417, Cys390–Cys440, and Cys392–Cys406. A helical transmembrane segment spans residues Val521–Ile541. Residues Leu542–Asn632 lie on the Cytoplasmic side of the membrane. Low complexity predominate over residues Ser612–Ser622. The tract at residues Ser612–Asn632 is disordered. Over residues Tyr623–Asn632 the composition is skewed to basic and acidic residues.

It belongs to the amiloride-sensitive sodium channel (TC 1.A.6) family. SCNN1A subfamily. Heterotrimer; containing an alpha/SCNN1A, a beta/SCNN1B and a gamma/SCNN1G subunit. Interacts with shroom1.

Its subcellular location is the apical cell membrane. It is found in the cell projection. The protein localises to the cilium. It localises to the cytoplasmic granule. The protein resides in the cytoplasm. Its subcellular location is the cytoplasmic vesicle. It is found in the secretory vesicle. The protein localises to the acrosome. It localises to the flagellum. The catalysed reaction is Na(+)(in) = Na(+)(out). Its activity is regulated as follows. Originally identified and characterized by its inhibition by the diuretic drug amiloride. Its function is as follows. This is one of the three pore-forming subunits of the heterotrimeric epithelial sodium channel (ENaC), a critical regulator of sodium balance and fluid homeostasis. ENaC operates in epithelial tissues, where it mediates the electrodiffusion of sodium ions from extracellular fluid through the apical membrane of cells, with water following osmotically. It plays a key role in maintaining sodium homeostasis through electrogenic sodium reabsorption in the kidneys. The sequence is that of Epithelial sodium channel subunit alpha from Xenopus laevis (African clawed frog).